The chain runs to 249 residues: MPFEIVFDGAKEFADLIATASNLIDEAAFKVTDEGISMRAMDPSRVVLIDLNLPESIFSKYEVEEEETIGINMDHFKKILKRGKGKDTLILKKGDENFLEITFEGTAKRTFRLPLIDVEELELDLPELPFTAKVVLLGEVLKEAVKDASLVSDAMKFIAKENEFSMRAEGETNEVEIKLTLEDEGLLDIEVEEETKSAYGISYLADMVKGIGKADEVTIRFGNEMPLQMDYFIRDEGKLTFLLAPRVED.

It belongs to the PCNA family. In terms of assembly, homotrimer. The subunits circularize to form a toroid; DNA passes through its center. Replication factor C (RFC) is required to load the toroid on the DNA.

Its function is as follows. Sliding clamp subunit that acts as a moving platform for DNA processing. Responsible for tethering the catalytic subunit of DNA polymerase and other proteins to DNA during high-speed replication. The sequence is that of DNA polymerase sliding clamp from Thermococcus fumicolans.